The chain runs to 299 residues: NAD(+) hydrolase PdTIR (299 aa).

Residues 164-297 (PPHDIFISHA…EIVADLMAII (134 aa)) enclose the TIR domain. NAD(+) is bound by residues 173-174 (AW) and Arg203. The active site involves Glu239.

In terms of assembly, homodimer. Interacts with host MYD88.

The enzyme catalyses NAD(+) + H2O = ADP-D-ribose + nicotinamide + H(+). Functionally, NAD(+) hydrolase (NADase) that catalyzes cleavage of NAD(+) into ADP-D-ribose (ADPR) and nicotinamide. The chain is NAD(+) hydrolase PdTIR from Paracoccus denitrificans (strain Pd 1222).